Consider the following 287-residue polypeptide: Ribosomal RNA small subunit methyltransferase A (287 aa).

The S-adenosyl-L-methionine site is built by Asn-28, Leu-30, Gly-55, Glu-77, Asp-103, and Asn-123.

The protein belongs to the class I-like SAM-binding methyltransferase superfamily. rRNA adenine N(6)-methyltransferase family. RsmA subfamily.

It is found in the cytoplasm. The catalysed reaction is adenosine(1518)/adenosine(1519) in 16S rRNA + 4 S-adenosyl-L-methionine = N(6)-dimethyladenosine(1518)/N(6)-dimethyladenosine(1519) in 16S rRNA + 4 S-adenosyl-L-homocysteine + 4 H(+). Functionally, specifically dimethylates two adjacent adenosines (A1518 and A1519) in the loop of a conserved hairpin near the 3'-end of 16S rRNA in the 30S particle. May play a critical role in biogenesis of 30S subunits. The sequence is that of Ribosomal RNA small subunit methyltransferase A from Rhodopseudomonas palustris (strain BisB5).